The following is a 218-amino-acid chain: Small ribosomal subunit protein uS3c (218 aa).

The KH type-2 domain maps to 47–118 (VQKNIRISSG…KLNIAITRIS (72 aa)).

This sequence belongs to the universal ribosomal protein uS3 family. In terms of assembly, part of the 30S ribosomal subunit.

It localises to the plastid. The protein localises to the chloroplast. The sequence is that of Small ribosomal subunit protein uS3c (rps3) from Crucihimalaya wallichii (Rock-cress).